A 91-amino-acid chain; its full sequence is MIKPNDFKKNTLCNCNCIQSDQIYTDPNVYPSTPTHEHRISHFLNYRFFKHQSASFPSCRSLKVDDLRKKKLQNSYINRNEKCLHWFTIGH.

This is an uncharacterized protein from Kluyveromyces lactis (strain ATCC 8585 / CBS 2359 / DSM 70799 / NBRC 1267 / NRRL Y-1140 / WM37) (Yeast).